The chain runs to 452 residues: Interferon-induced protein 44-like (452 aa).

In terms of domain architecture, TLDc spans 1–159 (MEVTTRLTWN…YLECEVFRVE (159 aa)).

The protein belongs to the IFI44 family. Interacts with FKBP5; this interaction modulates IKBKB and IKBKE kinase activities.

It is found in the cytoplasm. Its function is as follows. Type I interferon-stimulated gene (ISG) that plays a critical role in antiviral and antibacterial activity. During bacterial infection, promotes macrophage differentiation and facilitates inflammatory cytokine secretion. Plays a role in the control of respiratory syncytial virus/RSV infection, reducing the ability of the virus to replicate. Exhibits a low antiviral activity against hepatitis C virus. Also acts as a feedback regulator of IFN responses by negatively regulating IKBKB and IKBKE kinase activities through interaction with FKBP5. The protein is Interferon-induced protein 44-like (IFI44L) of Homo sapiens (Human).